We begin with the raw amino-acid sequence, 59 residues long: uncharacterized protein (59 aa).

The chain crosses the membrane as a helical span at residues 7 to 24; the sequence is FLLVFIILAQLLSCTPSA.

It localises to the membrane. This is an uncharacterized protein from Rickettsia prowazekii (strain Madrid E).